Consider the following 226-residue polypeptide: Leucyl/phenylalanyl-tRNA--protein transferase (226 aa).

The protein belongs to the L/F-transferase family.

It localises to the cytoplasm. The catalysed reaction is N-terminal L-lysyl-[protein] + L-leucyl-tRNA(Leu) = N-terminal L-leucyl-L-lysyl-[protein] + tRNA(Leu) + H(+). It carries out the reaction N-terminal L-arginyl-[protein] + L-leucyl-tRNA(Leu) = N-terminal L-leucyl-L-arginyl-[protein] + tRNA(Leu) + H(+). The enzyme catalyses L-phenylalanyl-tRNA(Phe) + an N-terminal L-alpha-aminoacyl-[protein] = an N-terminal L-phenylalanyl-L-alpha-aminoacyl-[protein] + tRNA(Phe). Functions in the N-end rule pathway of protein degradation where it conjugates Leu, Phe and, less efficiently, Met from aminoacyl-tRNAs to the N-termini of proteins containing an N-terminal arginine or lysine. The sequence is that of Leucyl/phenylalanyl-tRNA--protein transferase from Bradyrhizobium sp. (strain ORS 278).